The primary structure comprises 290 residues: Probable aquaporin PIP2-1 (290 aa).

Transmembrane regions (helical) follow at residues 43-63 (AVIA…ATVI) and 80-100 (CGGV…FILV). Residues 112–114 (NPA) carry the NPA 1 motif. The next 3 membrane-spanning stretches (helical) occupy residues 131–151 (ILYI…VKAF), 173–193 (GTGL…VFSA), and 207–227 (VLAP…TIPI). The NPA 2 signature appears at 233 to 235 (NPA). A helical membrane pass occupies residues 255–275 (IFWVGPFVGAAIAAFYHQYIL).

Belongs to the MIP/aquaporin (TC 1.A.8) family. PIP (TC 1.A.8.11) subfamily. Expressed in roots, leaves and anthers.

It is found in the cell membrane. Aquaporins facilitate the transport of water and small neutral solutes across cell membranes. The chain is Probable aquaporin PIP2-1 (PIP2-1) from Oryza sativa subsp. japonica (Rice).